The sequence spans 449 residues: Glutamyl-tRNA reductase (449 aa).

Substrate-binding positions include 58 to 61 (TCNR), Ser121, 126 to 128 (ETQ), and Gln132. Cys59 acts as the Nucleophile in catalysis. 203–208 (GLGEMA) lines the NADP(+) pocket.

It belongs to the glutamyl-tRNA reductase family. As to quaternary structure, homodimer.

It carries out the reaction (S)-4-amino-5-oxopentanoate + tRNA(Glu) + NADP(+) = L-glutamyl-tRNA(Glu) + NADPH + H(+). It functions in the pathway porphyrin-containing compound metabolism; protoporphyrin-IX biosynthesis; 5-aminolevulinate from L-glutamyl-tRNA(Glu): step 1/2. Catalyzes the NADPH-dependent reduction of glutamyl-tRNA(Glu) to glutamate 1-semialdehyde (GSA). This is Glutamyl-tRNA reductase from Helicobacter pylori (strain ATCC 700392 / 26695) (Campylobacter pylori).